Reading from the N-terminus, the 307-residue chain is uncharacterized protein (307 aa).

To B.burgdorferi BB0340.

This is an uncharacterized protein from Treponema pallidum (strain Nichols).